Reading from the N-terminus, the 536-residue chain is Potassium voltage-gated channel protein shk-1 (536 aa).

Disordered stretches follow at residues 1–31 (MRFGGQRRCIESSDDNDSIDSMSIQQKNKEK) and 87–131 (AAEM…HPYT). Topologically, residues 1–275 (MRFGGQRRCI…EYPDSSLSAR (275 aa)) are cytoplasmic. Polar residues predominate over residues 116–131 (QRGTPDTSSTQGHPYT). A helical transmembrane segment spans residues 276–296 (IIAFISIAVIALSIISFCWET). At 297-322 (VPSDIEEKPINNSATAELLDEMDEKH) the chain is on the extracellular side. Residues 323–343 (YSPFFWIELMCILWFTIELIL) form a helical membrane-spanning segment. Residues 344 to 356 (RFISCPCKVTFAT) lie on the Cytoplasmic side of the membrane. Residues 357–377 (SVLNIIDFVAIAPFFVNFFFA) form a helical membrane-spanning segment. Residues 378–425 (DTSKSNSSMSFAVLRVLRLVRVFRVFKLSRHSVGLQILGKTFRSSVQE) lie on the Extracellular side of the membrane. The helical; Voltage-sensor transmembrane segment at 426–446 (FCLLIFFMAIALVLFASGMYF) threads the bilayer. Over 447-458 (AEQGEPNSKFTS) the chain is Cytoplasmic. The chain crosses the membrane as a helical span at residues 459-479 (IPASFWFVLVTMTTVGYGDLV). The Extracellular portion of the chain corresponds to 480 to 486 (PLSPFGK). The helical transmembrane segment at 487 to 507 (VVGGMCAMIGVLTLALPVPII) threads the bilayer. Residues 508 to 536 (VANFKHFYRQENRLASMKSKGDDADDDIA) lie on the Cytoplasmic side of the membrane.

It belongs to the potassium channel family. A (Shaker) (TC 1.A.1.2) subfamily. Shaker sub-subfamily. As to expression, expressed in a variety of interneurons and sensory neurons, as well as body wall muscle.

Its subcellular location is the membrane. Its function is as follows. Mediates the voltage-dependent potassium ion permeability of excitable membranes. Has an important role in repolarization and in regulating the pattern of action potential firing. Isoform a expresses currents in a more depolarized voltage range than isoform d. The sequence is that of Potassium voltage-gated channel protein shk-1 from Caenorhabditis elegans.